The chain runs to 262 residues: Malonyl-[acyl-carrier protein] O-methyltransferase (262 aa).

It belongs to the methyltransferase superfamily.

The enzyme catalyses malonyl-[ACP] + S-adenosyl-L-methionine = malonyl-[ACP] methyl ester + S-adenosyl-L-homocysteine. It participates in cofactor biosynthesis; biotin biosynthesis. Its function is as follows. Converts the free carboxyl group of a malonyl-thioester to its methyl ester by transfer of a methyl group from S-adenosyl-L-methionine (SAM). It allows to synthesize pimeloyl-ACP via the fatty acid synthetic pathway. The protein is Malonyl-[acyl-carrier protein] O-methyltransferase of Dechloromonas aromatica (strain RCB).